Here is a 469-residue protein sequence, read N- to C-terminus: GTPase Der (469 aa).

2 consecutive EngA-type G domains span residues 3-167 (PTVA…PDEV) and 175-348 (PKFA…RAAM). GTP contacts are provided by residues 9-16 (GRPNVGKS), 56-60 (DTGGF), 119-122 (NKAE), 181-188 (GRPNVGKS), 228-232 (DTAGV), and 293-296 (NKWD). The KH-like domain maps to 349 to 433 (SKLATPKLTR…PLRVQYKSSE (85 aa)). Residues 429 to 469 (YKSSENPFDNDEKDKPRAKPKPMSKMRGREKEVRYGKNSKK) form a disordered region.

Belongs to the TRAFAC class TrmE-Era-EngA-EngB-Septin-like GTPase superfamily. EngA (Der) GTPase family. As to quaternary structure, associates with the 50S ribosomal subunit.

In terms of biological role, GTPase that plays an essential role in the late steps of ribosome biogenesis. The protein is GTPase Der of Chromobacterium violaceum (strain ATCC 12472 / DSM 30191 / JCM 1249 / CCUG 213 / NBRC 12614 / NCIMB 9131 / NCTC 9757 / MK).